A 240-amino-acid polypeptide reads, in one-letter code: Enoyl-CoA delta isomerase 1, peroxisomal (240 aa).

Residues 238–240 (SKL) carry the Microbody targeting signal motif.

The protein belongs to the enoyl-CoA hydratase/isomerase family.

It localises to the peroxisome. It catalyses the reaction a (3Z)-enoyl-CoA = a 4-saturated (2E)-enoyl-CoA. It carries out the reaction a (3E)-enoyl-CoA = a 4-saturated (2E)-enoyl-CoA. The protein operates within lipid metabolism; fatty acid beta-oxidation. In terms of biological role, able to isomerize both 3-cis and 3-trans double bonds into the 2-trans form in a range of enoyl-CoA species. Essential for the beta oxidation of unsaturated fatty acids. The polypeptide is Enoyl-CoA delta isomerase 1, peroxisomal (Arabidopsis thaliana (Mouse-ear cress)).